The sequence spans 61 residues: Three-finger hemachatoxin (61 aa).

4 cysteine pairs are disulfide-bonded: C3/C22, C15/C39, C43/C54, and C55/C60.

This sequence belongs to the three-finger toxin family. Short-chain subfamily. Type IB cytotoxin sub-subfamily. As to expression, expressed by the venom gland.

It localises to the secreted. Its function is as follows. This protein lyses red blood cells and has cardiotoxic and hypotensive activities. The polypeptide is Three-finger hemachatoxin (Hemachatus haemachatus (Rinkhals)).